Reading from the N-terminus, the 214-residue chain is uncharacterized protein (214 aa).

Belongs to the uracil-DNA glycosylase (UDG) superfamily.

This is an uncharacterized protein from Haemophilus influenzae (strain ATCC 51907 / DSM 11121 / KW20 / Rd).